The following is an 887-amino-acid chain: Transportin-2 (887 aa).

HEAT repeat units lie at residues 9 to 36 (GLQQ…DKLK), 41 to 79 (FPDF…AHYQ), 88 to 121 (FIKQ…KGEL), 127 to 164 (LLPQ…LDSD), 171 to 201 (NIMI…QFIM), 214 to 241 (FIEH…VMLL), 253 to 280 (HSII…FWLT), 296 to 386 (VQLI…LANV), 394 to 422 (HLLP…GAIA), 434 to 461 (PELI…TLSR), 475 to 508 (LKPL…EEEA), 516 to 549 (LSYI…ADSV), 557 to 595 (EYIQ…TALQ), 603 to 654 (EPVY…GLGG), 665 to 696 (IMTL…KACF), 704 to 737 (AEFM…MQMG), 745 to 780 (QMVL…YVCP), 788 to 821 (QQFI…IGVN), 830 to 861 (IFFC…KDQV), and 864 to 884 (ENWQ…LAAF). The 69-residue stretch at 31–99 (VQDKLKQLNQ…KQECLNNIGD (69 aa)) folds into the Importin N-terminal domain. Residues 344 to 363 (TLTHEAERPDSSEDAEDDDD) are disordered. Lysine 852 carries the N6-acetyllysine modification.

This sequence belongs to the importin beta family. Importin beta-2 subfamily.

The protein resides in the cytoplasm. It localises to the nucleus. Its function is as follows. Probably functions in nuclear protein import as nuclear transport receptor. Serves as receptor for nuclear localization signals (NLS) in cargo substrates. Is thought to mediate docking of the importin/substrate complex to the nuclear pore complex (NPC) through binding to nucleoporin and the complex is subsequently translocated through the pore by an energy requiring, Ran-dependent mechanism. At the nucleoplasmic side of the NPC, Ran binds to the importin, the importin/substrate complex dissociates and importin is re-exported from the nucleus to the cytoplasm where GTP hydrolysis releases Ran. The directionality of nuclear import is thought to be conferred by an asymmetric distribution of the GTP- and GDP-bound forms of Ran between the cytoplasm and nucleus. The chain is Transportin-2 (Tnpo2) from Mus musculus (Mouse).